We begin with the raw amino-acid sequence, 323 residues long: Sporulation-delaying protein SdpB (323 aa).

6 helical membrane-spanning segments follow: residues 27–49 (LLGFSTLLVLLFNSTDILFSYSA), 70–92 (SINFEIIRYLMIFILTLVVIGWR), 112–134 (LTIDGGEQIATVLSFLILPVTLL), 155–177 (TVLFYIMTIIKIQVFIIYLNAAL), 219–241 (IVVITWLVTIFELFLAASIISNI), and 248–270 (LVLGILFHIGIIFSIGIVSFGLI).

The protein localises to the cell membrane. In terms of biological role, required for the maturation of SdpC to SDP. Not required for SdpC signal peptide cleavage, secretion from the cell or disulfide bond formation. The sequence is that of Sporulation-delaying protein SdpB from Bacillus subtilis (strain 168).